Here is a 102-residue protein sequence, read N- to C-terminus: Putative septation protein SpoVG (102 aa).

Residues 83-102 (TDEVIPDKNATSDNEESDEA) are disordered.

The protein belongs to the SpoVG family.

Functionally, could be involved in septation. In Staphylococcus epidermidis (strain ATCC 35984 / DSM 28319 / BCRC 17069 / CCUG 31568 / BM 3577 / RP62A), this protein is Putative septation protein SpoVG.